Here is a 293-residue protein sequence, read N- to C-terminus: 33 kDa chaperonin (293 aa).

2 cysteine pairs are disulfide-bonded: C236–C238 and C269–C272.

This sequence belongs to the HSP33 family. Post-translationally, under oxidizing conditions two disulfide bonds are formed involving the reactive cysteines. Under reducing conditions zinc is bound to the reactive cysteines and the protein is inactive.

Its subcellular location is the cytoplasm. Functionally, redox regulated molecular chaperone. Protects both thermally unfolding and oxidatively damaged proteins from irreversible aggregation. Plays an important role in the bacterial defense system toward oxidative stress. The protein is 33 kDa chaperonin of Lactobacillus delbrueckii subsp. bulgaricus (strain ATCC BAA-365 / Lb-18).